Reading from the N-terminus, the 1021-residue chain is Ankyrin repeat- and BTB/POZ domain-containing protein 3-A (1021 aa).

The helical transmembrane segment at 160–180 (MVLSWTISVNCITAALSALSL) threads the bilayer. ANK repeat units follow at residues 515 to 544 (QGMT…DINS), 561 to 590 (RQGT…NVEG), 599 to 628 (YTET…DPLI), and 642 to 671 (GEMN…KDKG). The BTB domain maps to 836–902 (SDVTFLVEGK…LYCGGTESLH (67 aa)).

It is found in the membrane. This chain is Ankyrin repeat- and BTB/POZ domain-containing protein 3-A (abtb3a), found in Danio rerio (Zebrafish).